The following is a 396-amino-acid chain: Phosphoglycerate kinase (396 aa).

Residues aspartate 21 to asparagine 23, arginine 36, histidine 59 to lysine 62, arginine 119, and arginine 156 contribute to the substrate site. ATP is bound by residues lysine 206, glycine 294, glutamate 325, and glycine 352 to serine 355.

This sequence belongs to the phosphoglycerate kinase family. As to quaternary structure, monomer.

The protein localises to the cytoplasm. The catalysed reaction is (2R)-3-phosphoglycerate + ATP = (2R)-3-phospho-glyceroyl phosphate + ADP. It functions in the pathway carbohydrate degradation; glycolysis; pyruvate from D-glyceraldehyde 3-phosphate: step 2/5. The chain is Phosphoglycerate kinase from Staphylococcus aureus (strain USA300).